Reading from the N-terminus, the 122-residue chain is MKQLGKHIILELWGCENQALDDQPGIEKMLVDAVKACGATLICVKTHKFSPQGVTGVAVLSESHISIHTWPELRYAAMDVFTCGEHVTPHDTIPEIQKFLKPEKIDVMDIKRGIIEVDEVKE.

Ser63 serves as the catalytic Schiff-base intermediate with substrate; via pyruvic acid. Ser63 bears the Pyruvic acid (Ser); by autocatalysis mark. His68 (proton acceptor; for processing activity) is an active-site residue. Cys83 functions as the Proton donor; for catalytic activity in the catalytic mechanism.

Belongs to the prokaryotic AdoMetDC family. Type 1 subfamily. Heterotetramer of two alpha and two beta chains arranged as a dimer of alpha/beta heterodimers. It depends on pyruvate as a cofactor. In terms of processing, is synthesized initially as an inactive proenzyme. Formation of the active enzyme involves a self-maturation process in which the active site pyruvoyl group is generated from an internal serine residue via an autocatalytic post-translational modification. Two non-identical subunits are generated from the proenzyme in this reaction, and the pyruvate is formed at the N-terminus of the alpha chain, which is derived from the carboxyl end of the proenzyme. The post-translation cleavage follows an unusual pathway, termed non-hydrolytic serinolysis, in which the side chain hydroxyl group of the serine supplies its oxygen atom to form the C-terminus of the beta chain, while the remainder of the serine residue undergoes an oxidative deamination to produce ammonia and the pyruvoyl group blocking the N-terminus of the alpha chain.

It carries out the reaction S-adenosyl-L-methionine + H(+) = S-adenosyl 3-(methylsulfanyl)propylamine + CO2. It functions in the pathway amine and polyamine biosynthesis; S-adenosylmethioninamine biosynthesis; S-adenosylmethioninamine from S-adenosyl-L-methionine: step 1/1. Its function is as follows. Catalyzes the decarboxylation of S-adenosylmethionine to S-adenosylmethioninamine (dcAdoMet), the propylamine donor required for the synthesis of the polyamines spermine and spermidine from the diamine putrescine. In Methanococcus maripaludis (strain C5 / ATCC BAA-1333), this protein is S-adenosylmethionine decarboxylase proenzyme.